We begin with the raw amino-acid sequence, 440 residues long: Gamma-aminobutyric acid receptor subunit pi (440 aa).

The signal sequence occupies residues 1-23; that stretch reads MSYSLYLAFVCLNLLAQRMCIQG. Residues 24–241 are Extracellular-facing; that stretch reads NQFNVEVSRS…LVLQFELRRN (218 aa). Residues N43, N102, and N145 are each glycosylated (N-linked (GlcNAc...) asparagine). A disulfide bridge connects residues C160 and C174. 2 N-linked (GlcNAc...) asparagine glycosylation sites follow: N196 and N228. A helical membrane pass occupies residues 242 to 262; that stretch reads VLYFILETYVPSTFLVVLSWV. Residues 263–270 lie on the Cytoplasmic side of the membrane; the sequence is SFWISLES. Residues 271–290 form a helical membrane-spanning segment; it reads VPARTCIGVTTVLSMTTLMI. Residues 291–301 lie on the Extracellular side of the membrane; it reads GSRTSLPNTNC. Residues 302-322 form a helical membrane-spanning segment; sequence FIKAIDVYLGICFSFVFGALL. The Cytoplasmic portion of the chain corresponds to 323 to 419; sequence EYAVAHYSSL…NPSNVDRYSK (97 aa). The helical transmembrane segment at 420 to 440 threads the bilayer; that stretch reads LLFPLIFMLANVFYWAYYMYF.

Belongs to the ligand-gated ion channel (TC 1.A.9) family. Gamma-aminobutyric acid receptor (TC 1.A.9.5) subfamily. GABRP sub-subfamily. Heteropentamer, formed by a combination of alpha (GABRA1-6), beta (GABRB1-3), gamma (GABRG1-3), delta (GABRD), epsilon (GABRE), rho (GABRR1-3), pi (GABRP) and theta (GABRQ) chains, each subunit exhibiting distinct physiological and pharmacological properties. In terms of tissue distribution, expressed in lungs, in alveolar epithelium.

The protein resides in the cell membrane. The protein localises to the apical cell membrane. The enzyme catalyses chloride(in) = chloride(out). Its function is as follows. Pi subunit of the heteropentameric ligand-gated chloride channel gated by gamma-aminobutyric acid (GABA). GABA-gated chloride channels, also named GABA(A) receptors (GABAAR), consist of five subunits arranged around a central pore and contain GABA active binding site(s) located at the alpha and beta subunit interfaces. When activated by GABA, GABAARs selectively allow the flow of chloride anions across the cell membrane down their electrochemical gradient. Pi-containing GABAARs are mostly located in peripheral tissues. In the uterus, pi subunits modulate uterus contraction by altering the sensitivity of GABAARs to pregnanolone. In the lungs, pi-containing GABAARs contribute to pulmonary fluid transport via luminal secretion of chloride. The protein is Gamma-aminobutyric acid receptor subunit pi of Rattus norvegicus (Rat).